We begin with the raw amino-acid sequence, 223 residues long: Peptidyl-prolyl cis-trans isomerase, mitochondrial (223 aa).

The N-terminal 44 residues, 1 to 44 (MFGPRHFSVLKTTGSLVSSTFSSSLKPTATFSCARAFSQTSSIM), are a transit peptide targeting the mitochondrion. Residues 62 to 222 (NKPTSEIKAQ…KKPTIVDCGA (161 aa)) enclose the PPIase cyclophilin-type domain.

This sequence belongs to the cyclophilin-type PPIase family.

Its subcellular location is the mitochondrion. It is found in the cytoplasm. It carries out the reaction [protein]-peptidylproline (omega=180) = [protein]-peptidylproline (omega=0). Binds cyclosporin A (CsA). CsA mediates some of its effects via an inhibitory action on PPIase. In terms of biological role, PPIases accelerate the folding of proteins. It catalyzes the cis-trans isomerization of proline imidic peptide bonds in oligopeptides. This chain is Peptidyl-prolyl cis-trans isomerase, mitochondrial (csr-1), found in Neurospora crassa (strain ATCC 24698 / 74-OR23-1A / CBS 708.71 / DSM 1257 / FGSC 987).